The following is a 186-amino-acid chain: MFTQSIPECYSCKQPITEICLTAFGLQWHPHHIGCNVCGKDFSDGSRCEEGPDGFAYCSKDLLDKFAPKCQKCKQAIIGQTTNAVGKTYHPEHFQCETCNMVLTGNFYHTDDGTPFCEKHYYEKIGFLCRHCDKPIISGKCITVGTTRFHPEHFFCQFCKSNLSGVGYKKQGDKCYCNECFLKLYG.

3 consecutive LIM zinc-binding domains span residues 7-67, 68-127, and 128-186; these read PECY…DKFA, PKCQ…KIGF, and LCRH…KLYG.

The protein is LIM domain-containing protein DDB_G0271356 of Dictyostelium discoideum (Social amoeba).